Reading from the N-terminus, the 147-residue chain is uncharacterized protein (147 aa).

This is an uncharacterized protein from Saccharomyces cerevisiae (strain ATCC 204508 / S288c) (Baker's yeast).